Reading from the N-terminus, the 145-residue chain is Putative antiporter subunit mnhG2 (145 aa).

3 helical membrane-spanning segments follow: residues 11–31 (IAAV…IGIV), 51–71 (VLLT…FFSV), and 72–92 (RLLL…HLVA).

This sequence belongs to the CPA3 antiporters (TC 2.A.63) subunit G family. In terms of assembly, may form a heterooligomeric complex that consists of seven subunits: mnhA2, mnhB2, mnhC2, mnhD2, mnhE2, mnhF2 and mnhG2.

The protein localises to the cell membrane. The polypeptide is Putative antiporter subunit mnhG2 (mnhG2) (Staphylococcus aureus (strain COL)).